The following is a 493-amino-acid chain: Lysine--tRNA ligase (493 aa).

2 residues coordinate Mg(2+): Glu-400 and Glu-407.

This sequence belongs to the class-II aminoacyl-tRNA synthetase family. As to quaternary structure, homodimer. It depends on Mg(2+) as a cofactor.

The protein localises to the cytoplasm. It catalyses the reaction tRNA(Lys) + L-lysine + ATP = L-lysyl-tRNA(Lys) + AMP + diphosphate. This is Lysine--tRNA ligase from Syntrophomonas wolfei subsp. wolfei (strain DSM 2245B / Goettingen).